A 208-amino-acid chain; its full sequence is Thymidylate kinase (208 aa).

10 to 17 is a binding site for ATP; it reads GPEGSGKT.

Belongs to the thymidylate kinase family.

It carries out the reaction dTMP + ATP = dTDP + ADP. Functionally, phosphorylation of dTMP to form dTDP in both de novo and salvage pathways of dTTP synthesis. The polypeptide is Thymidylate kinase (Bacillus cereus (strain Q1)).